Reading from the N-terminus, the 249-residue chain is Acetate transporter protein patA (249 aa).

The next 6 membrane-spanning stretches (helical) occupy residues 42–62 (IGSP…TLSM), 71–91 (AITN…LVLV), 106–126 (VFGG…PAFG), 141–161 (AIGY…VAAM), 169–189 (GMLG…FSFA), and 202–222 (AAGA…GHLM).

This sequence belongs to the acetate uptake transporter (AceTr) (TC 2.A.96) family.

The protein localises to the endoplasmic reticulum membrane. It participates in mycotoxin biosynthesis; patulin biosynthesis. Acetate transporter protein; part of the gene cluster that mediates the biosynthesis of patulin, an acetate-derived tetraketide mycotoxin produced by several fungal species that shows antimicrobial properties against several bacteria. May be involved in the uptake of acetate, a substrate for the synthesis of 6-methylsalicylic acid by the polyketide synthase patK. The protein is Acetate transporter protein patA of Penicillium expansum (Blue mold rot fungus).